A 128-amino-acid chain; its full sequence is L-ectoine synthase (128 aa).

This sequence belongs to the ectoine synthase family.

The enzyme catalyses (2S)-4-acetamido-2-aminobutanoate = L-ectoine + H2O. Its pathway is amine and polyamine biosynthesis; ectoine biosynthesis; L-ectoine from L-aspartate 4-semialdehyde: step 3/3. Catalyzes the circularization of gamma-N-acetyl-alpha,gamma-diaminobutyric acid (ADABA) to ectoine (1,4,5,6-tetrahydro-2-methyl-4-pyrimidine carboxylic acid), which is an excellent osmoprotectant. The chain is L-ectoine synthase from Vibrio atlanticus (strain LGP32) (Vibrio splendidus (strain Mel32)).